A 299-amino-acid chain; its full sequence is Protein charybde (299 aa).

A disordered region spans residues 73–103 (LNTRPSATPPSAGGGGPLAGGGSVGMTTPKQ). A compositionally biased stretch (gly residues) spans 84 to 96 (AGGGGPLAGGGSV).

Belongs to the DDIT4 family.

It is found in the cytoplasm. Inhibits cell growth by regulating the Tor pathway upstream of the Tsc1-Tsc2 complex and downstream of Akt1. Acts as a cell death activator during head development. This Drosophila melanogaster (Fruit fly) protein is Protein charybde (chrb).